Consider the following 590-residue polypeptide: Probable lysine-specific demethylase 4B (590 aa).

The JmjN domain occupies 9 to 51; sequence IKVFRPTWEEFKDFPKYVAYMESQGAHKAGLAKVVPPPEWVPR. Position 130 (tyrosine 130) interacts with 2-oxoglutarate. The JmjC domain occupies 140–306; sequence DTDQDSWNIN…YGKRAVQCTC (167 aa). Histidine 186 and glutamate 188 together coordinate Fe cation. 2 residues coordinate 2-oxoglutarate: asparagine 196 and lysine 204. The Zn(2+) site is built by cysteine 232 and histidine 238. A 2-oxoglutarate-binding site is contributed by lysine 239. Histidine 274 provides a ligand contact to Fe cation. Residues cysteine 304 and cysteine 306 each coordinate Zn(2+). Disordered stretches follow at residues 372-395 and 417-590; these read PTKA…QNPN and ATDE…TASP. The span at 445–458 shows a compositional bias: acidic residues; the sequence is EYIDDGTEDDDEEE. Residues 480-494 are compositionally biased toward basic residues; sequence SKRKTNSRNNRGRSP. Low complexity-rich tracts occupy residues 502–513 and 537–571; these read ISPASSTSSTSR and TTSP…TPPA.

The protein belongs to the JHDM3 histone demethylase family. Fe(2+) serves as cofactor.

It is found in the nucleus. It catalyses the reaction N(6),N(6),N(6)-trimethyl-L-lysyl(9)-[histone H3] + 2 2-oxoglutarate + 2 O2 = N(6)-methyl-L-lysyl(9)-[histone H3] + 2 formaldehyde + 2 succinate + 2 CO2. Its function is as follows. Probable histone demethylase that specifically demethylates 'Lys-9' and 'Lys-36' residues of histone H3, thereby playing a central role in histone code. Demethylation of Lys residue generates formaldehyde and succinate. This chain is Probable lysine-specific demethylase 4B (Kdm4B), found in Drosophila melanogaster (Fruit fly).